The primary structure comprises 105 residues: Wound-induced protein 1 (105 aa).

To potato anionic peroxidase. Ubiquitous.

The protein is Wound-induced protein 1 (WUN1) of Solanum tuberosum (Potato).